A 362-amino-acid polypeptide reads, in one-letter code: DNA polymerase IV (362 aa).

The region spanning 6–187 (IIHVDMDAFY…LPVSSFHGVG (182 aa)) is the UmuC domain. Mg(2+)-binding residues include Asp-10 and Asp-105. Residue Glu-106 is part of the active site.

The protein belongs to the DNA polymerase type-Y family. In terms of assembly, monomer. It depends on Mg(2+) as a cofactor.

The protein resides in the cytoplasm. The enzyme catalyses DNA(n) + a 2'-deoxyribonucleoside 5'-triphosphate = DNA(n+1) + diphosphate. Its function is as follows. Poorly processive, error-prone DNA polymerase involved in untargeted mutagenesis. Copies undamaged DNA at stalled replication forks, which arise in vivo from mismatched or misaligned primer ends. These misaligned primers can be extended by PolIV. Exhibits no 3'-5' exonuclease (proofreading) activity. May be involved in translesional synthesis, in conjunction with the beta clamp from PolIII. The sequence is that of DNA polymerase IV from Leptospira interrogans serogroup Icterohaemorrhagiae serovar Lai (strain 56601).